The sequence spans 173 residues: MKTWYMVVVIGFLATLAQTSLALKEEDCEVCVKTVRRFADSLDDSTKKDYKQIETAFKKFCKAQKNKEHRFCYYLGGLEESATGILNELSKPLSWSMPAEKICEKLKKKDAQICDLRYEKQIDLNSVDLKKLKVRDLKKILNDWDESCDGCLEKGDFIKRIEELKPKYSRSEL.

The N-terminal stretch at 1-22 (MKTWYMVVVIGFLATLAQTSLA) is a signal peptide. 4 disulfide bridges follow: Cys-28–Cys-114, Cys-31–Cys-103, Cys-61–Cys-72, and Cys-148–Cys-151.

Belongs to the ARMET family. In stage 12, expression is seen in the stomodeum and the salivary gland primordia, and weakly in the mesoderm. From stage 13 onward, expression is in Garland cells, the outer wall of the proventriculus and salivary glands. Punctuate expression is also in the ventral nerve cord (VNC), specifically in eagle (eg)-positive cell body glia. Epidermal expression is seen at stage 15.

It localises to the secreted. Its function is as follows. Required during the maturation of the embryonic nervous system for maintenance of neuronal and cuticular connectivity. Essential for maintenance of dopaminergic neurons and dopamine levels. The polypeptide is Mesencephalic astrocyte-derived neurotrophic factor homolog (Manf) (Drosophila melanogaster (Fruit fly)).